Here is a 1383-residue protein sequence, read N- to C-terminus: ATP-dependent RNA helicase TDRD9 (1383 aa).

The segment at 35-82 (EAPREEVQRSEEVPNEDPTAQAQVPVKATAPARPASTSGRSLSQRSSE) is disordered. Residues 36 to 46 (APREEVQRSEE) are compositionally biased toward basic and acidic residues. Low complexity predominate over residues 70 to 80 (STSGRSLSQRS). Residues 144 to 310 (ISLIESNSVV…FAVPVQNKMN (167 aa)) form the Helicase ATP-binding domain. ATP is bound at residue 157 to 164 (GATGSGKS). Residues 256–259 (DEVH) carry the DEAH box motif. A Helicase C-terminal domain is found at 378–545 (SGAQFVSERS…ILKVKLLDMG (168 aa)). The Tudor domain maps to 945-1005 (HPHPDLVCLA…REIPCQFLEL (61 aa)).

Belongs to the DEAD box helicase family. DEAH subfamily. In terms of assembly, interacts with piRNA-associated proteins PIWIL1 and PIWIL4. Predominantly expressed in reproductive organs. Detected in mitotic spermatogonia, meiotic spermatocytes (predominantly at the pachytene stage), haploid spermatids in the testis, and in growing oocytes in the ovary (at protein level).

It is found in the cytoplasm. The protein resides in the nucleus. The catalysed reaction is ATP + H2O = ADP + phosphate + H(+). Functionally, ATP-binding RNA helicase which plays a central role during spermatogenesis by repressing transposable elements and preventing their mobilization, which is essential for the germline integrity. Acts via the piRNA metabolic process, which mediates the repression of transposable elements during meiosis by forming complexes composed of piRNAs and Piwi proteins and governs the methylation and subsequent repression of transposons. Acts downstream of piRNA biogenesis: exclusively required for transposon silencing in the nucleus, suggesting that it acts as a nuclear effector in the nucleus together with PIWIL4. The protein is ATP-dependent RNA helicase TDRD9 of Mus musculus (Mouse).